The chain runs to 202 residues: Small ribosomal subunit protein uS4 (202 aa).

The span at Met1–Arg13 shows a compositional bias: basic residues. The disordered stretch occupies residues Met1 to Arg42. The region spanning Asn90–Asn152 is the S4 RNA-binding domain.

Belongs to the universal ribosomal protein uS4 family. Part of the 30S ribosomal subunit. Contacts protein S5. The interaction surface between S4 and S5 is involved in control of translational fidelity.

Functionally, one of the primary rRNA binding proteins, it binds directly to 16S rRNA where it nucleates assembly of the body of the 30S subunit. In terms of biological role, with S5 and S12 plays an important role in translational accuracy. This Prochlorococcus marinus (strain MIT 9515) protein is Small ribosomal subunit protein uS4.